We begin with the raw amino-acid sequence, 673 residues long: DNA ligase (673 aa).

NAD(+) is bound by residues 33–37, 82–83, and glutamate 117; these read DSVYD and SL. Lysine 119 functions as the N6-AMP-lysine intermediate in the catalytic mechanism. NAD(+) contacts are provided by arginine 140, glutamate 177, lysine 295, and lysine 319. Zn(2+) is bound by residues cysteine 413, cysteine 416, cysteine 431, and cysteine 436. A BRCT domain is found at 595–673; it reads AVSQVLAGKK…EAELLALDPK (79 aa).

Belongs to the NAD-dependent DNA ligase family. LigA subfamily. Mg(2+) is required as a cofactor. Mn(2+) serves as cofactor.

The catalysed reaction is NAD(+) + (deoxyribonucleotide)n-3'-hydroxyl + 5'-phospho-(deoxyribonucleotide)m = (deoxyribonucleotide)n+m + AMP + beta-nicotinamide D-nucleotide.. Its function is as follows. DNA ligase that catalyzes the formation of phosphodiester linkages between 5'-phosphoryl and 3'-hydroxyl groups in double-stranded DNA using NAD as a coenzyme and as the energy source for the reaction. It is essential for DNA replication and repair of damaged DNA. This chain is DNA ligase, found in Synechococcus sp. (strain JA-3-3Ab) (Cyanobacteria bacterium Yellowstone A-Prime).